An 830-amino-acid polypeptide reads, in one-letter code: Lon protease (830 aa).

Residues 1-28 are disordered; sequence MTFDTNDDSIAKNSLAPYNQETEQQQEE. The 196-residue stretch at 50–245 folds into the Lon N-terminal domain; that stretch reads IPILPLRDVV…LVITHLTHEA (196 aa). 397-404 lines the ATP pocket; it reads GPPGVGKT. Positions 633 to 814 constitute a Lon proteolytic domain; the sequence is TLPPGVALGL…DEVLPLAFSE (182 aa). Active-site residues include serine 720 and lysine 763.

Belongs to the peptidase S16 family. Homohexamer. Organized in a ring with a central cavity.

The protein resides in the cytoplasm. It catalyses the reaction Hydrolysis of proteins in presence of ATP.. In terms of biological role, ATP-dependent serine protease that mediates the selective degradation of mutant and abnormal proteins as well as certain short-lived regulatory proteins. Required for cellular homeostasis and for survival from DNA damage and developmental changes induced by stress. Degrades polypeptides processively to yield small peptide fragments that are 5 to 10 amino acids long. Binds to DNA in a double-stranded, site-specific manner. This is Lon protease from Lawsonia intracellularis (strain PHE/MN1-00).